The chain runs to 193 residues: Xanthine phosphoribosyltransferase (193 aa).

Xanthine is bound by residues Leu20 and Thr27. Residue 128–132 (ANGQA) coordinates 5-phospho-alpha-D-ribose 1-diphosphate. Lys156 lines the xanthine pocket.

It belongs to the purine/pyrimidine phosphoribosyltransferase family. Xpt subfamily. In terms of assembly, homodimer.

Its subcellular location is the cytoplasm. The catalysed reaction is XMP + diphosphate = xanthine + 5-phospho-alpha-D-ribose 1-diphosphate. It participates in purine metabolism; XMP biosynthesis via salvage pathway; XMP from xanthine: step 1/1. In terms of biological role, converts the preformed base xanthine, a product of nucleic acid breakdown, to xanthosine 5'-monophosphate (XMP), so it can be reused for RNA or DNA synthesis. This chain is Xanthine phosphoribosyltransferase, found in Streptococcus pyogenes serotype M5 (strain Manfredo).